The sequence spans 174 residues: Crossover junction endodeoxyribonuclease RuvC (174 aa).

Residues D8, E67, and D139 contribute to the active site. Residues D8, E67, and D139 each coordinate Mg(2+).

It belongs to the RuvC family. Homodimer which binds Holliday junction (HJ) DNA. The HJ becomes 2-fold symmetrical on binding to RuvC with unstacked arms; it has a different conformation from HJ DNA in complex with RuvA. In the full resolvosome a probable DNA-RuvA(4)-RuvB(12)-RuvC(2) complex forms which resolves the HJ. Mg(2+) is required as a cofactor.

It is found in the cytoplasm. It catalyses the reaction Endonucleolytic cleavage at a junction such as a reciprocal single-stranded crossover between two homologous DNA duplexes (Holliday junction).. Its function is as follows. The RuvA-RuvB-RuvC complex processes Holliday junction (HJ) DNA during genetic recombination and DNA repair. Endonuclease that resolves HJ intermediates. Cleaves cruciform DNA by making single-stranded nicks across the HJ at symmetrical positions within the homologous arms, yielding a 5'-phosphate and a 3'-hydroxyl group; requires a central core of homology in the junction. The consensus cleavage sequence is 5'-(A/T)TT(C/G)-3'. Cleavage occurs on the 3'-side of the TT dinucleotide at the point of strand exchange. HJ branch migration catalyzed by RuvA-RuvB allows RuvC to scan DNA until it finds its consensus sequence, where it cleaves and resolves the cruciform DNA. The protein is Crossover junction endodeoxyribonuclease RuvC of Pseudomonas aeruginosa (strain LESB58).